We begin with the raw amino-acid sequence, 230 residues long: Thymidylate kinase (230 aa).

20 to 27 is a binding site for ATP; that stretch reads GGEGSGKS.

It belongs to the thymidylate kinase family.

It catalyses the reaction dTMP + ATP = dTDP + ADP. Its function is as follows. Phosphorylation of dTMP to form dTDP in both de novo and salvage pathways of dTTP synthesis. The polypeptide is Thymidylate kinase (Nitrobacter winogradskyi (strain ATCC 25391 / DSM 10237 / CIP 104748 / NCIMB 11846 / Nb-255)).